Here is a 100-residue protein sequence, read N- to C-terminus: Urease subunit gamma (100 aa).

The protein belongs to the urease gamma subunit family. As to quaternary structure, heterotrimer of UreA (gamma), UreB (beta) and UreC (alpha) subunits. Three heterotrimers associate to form the active enzyme.

Its subcellular location is the cytoplasm. It catalyses the reaction urea + 2 H2O + H(+) = hydrogencarbonate + 2 NH4(+). The protein operates within nitrogen metabolism; urea degradation; CO(2) and NH(3) from urea (urease route): step 1/1. This chain is Urease subunit gamma, found in Thioalkalivibrio sulfidiphilus (strain HL-EbGR7).